The primary structure comprises 160 residues: Large ribosomal subunit protein bL19 (160 aa).

This sequence belongs to the bacterial ribosomal protein bL19 family.

Functionally, this protein is located at the 30S-50S ribosomal subunit interface and may play a role in the structure and function of the aminoacyl-tRNA binding site. The polypeptide is Large ribosomal subunit protein bL19 (Prochlorococcus marinus subsp. pastoris (strain CCMP1986 / NIES-2087 / MED4)).